The following is a 208-amino-acid chain: Guanylate kinase (208 aa).

A Guanylate kinase-like domain is found at 8–187 (GVCLVISAPS…AISQARSVLT (180 aa)). 15–22 (APSGAGKS) contacts ATP.

It belongs to the guanylate kinase family.

It is found in the cytoplasm. It catalyses the reaction GMP + ATP = GDP + ADP. Functionally, essential for recycling GMP and indirectly, cGMP. The chain is Guanylate kinase from Gluconobacter oxydans (strain 621H) (Gluconobacter suboxydans).